We begin with the raw amino-acid sequence, 110 residues long: Hydrogenase maturation factor HypA (110 aa).

Histidine 2 contacts Ni(2+). Zn(2+) contacts are provided by cysteine 70, cysteine 73, cysteine 86, and cysteine 89.

This sequence belongs to the HypA/HybF family.

Involved in the maturation of [NiFe] hydrogenases. Required for nickel insertion into the metal center of the hydrogenase. This Geotalea uraniireducens (strain Rf4) (Geobacter uraniireducens) protein is Hydrogenase maturation factor HypA.